The following is a 431-amino-acid chain: MDLFILTRFILFLSFFMKSIHCQYSESQESGHNRNAPDKELTTEEFQLIFHQSQTVDIEYDFINITTEMIETERKVSFTIDGKEYHLSLTPAASQSVLPYGTKIKSAIWWTDNDTHIHEEDYSDERWDSRAIYENLEIMATILVRTENGTSYYDGVFVKYSNEGVRSLPGRLMNIYGANYHFVYDSNGSVYDVVLNGQDEPAVPADMASKIIFYSETPCTCRLLIIQDLLMKTSRRLSSISTIFWNAVNLRFRPVQHPKVNIIITGIVIAKNEAAFQHVYRARYSKNSKLVHTGRVIDNGRYFFGTNFDPYYDNYDASFTMASMDDPTGKGGATVIGGICSSSNNIAYIRDVGSYSGVKVATHELGHLLNGQHDSDTTCSEKINDNIYTIMAKQGSTKASKFVWSSCTLTAFANFSKTTSAACLKDTYRKQ.

A signal peptide spans 1–22 (MDLFILTRFILFLSFFMKSIHC). Residues Asn-64, Asn-113, Asn-148, and Asn-187 are each glycosylated (N-linked (GlcNAc...) asparagine). Residues 228–428 (DLLMKTSRRL…TSAACLKDTY (201 aa)) enclose the Peptidase M12B domain. 2 cysteine pairs are disulfide-bonded: Cys-340-Cys-423 and Cys-379-Cys-407. His-363 is a Zn(2+) binding site. The active site involves Glu-364. Zn(2+) contacts are provided by His-367 and His-373. N-linked (GlcNAc...) asparagine glycosylation is present at Asn-414.

It in the C-terminal section; belongs to the venom metalloproteinase (M12B) family. Monomer. Requires Zn(2+) as cofactor. In terms of tissue distribution, expressed by the venom gland.

It is found in the secreted. Its activity is regulated as follows. The gelatinase activity is inhibited by EDTA. In terms of biological role, the recombinant protein has gelatinase activity. In vivo, injection of this recombinant into fifth instar L.oleracea (host) larvae results in partial insect mortality associated with the molt to sixth instar, with surviving insects showing retarded development and growth. This chain is Venom metalloproteinase 1, found in Eulophus pennicornis (Parasitoid wasp).